The primary structure comprises 396 residues: L-cysteine desulfidase (396 aa).

Cys23 (proton acceptor) is an active-site residue. [4Fe-4S] cluster-binding residues include Cys287, Cys329, and Cys336.

It belongs to the L-cysteine desulfidase family. As to quaternary structure, homotrimer. It depends on [4Fe-4S] cluster as a cofactor.

It catalyses the reaction L-cysteine + H2O = hydrogen sulfide + pyruvate + NH4(+) + H(+). Its function is as follows. Catalyzes the cleavage of L-cysteine to form 2-aminoprop-2-enoate and sulfide. The former then spontaneously hydrolyzes to pyruvate and NH(3). May be responsible for the production of sulfide required for the biosynthesis of iron-sulfur centers in this archaea. In Methanococcus maripaludis (strain DSM 14266 / JCM 13030 / NBRC 101832 / S2 / LL), this protein is L-cysteine desulfidase.